Consider the following 878-residue polypeptide: Protein daughter of sevenless (878 aa).

A PH domain is found at 3–113 (RTFYEGWLIK…WVNCICQVCH (111 aa)). The tract at residues 132–176 (ENRTQHTSSSGGLSNSTQNTTTTSLHSSAGTTAPQASVPNAGGSA) is disordered. The span at 136–159 (QHTSSSGGLSNSTQNTTTTSLHSS) shows a compositional bias: low complexity. The segment covering 160–169 (AGTTAPQASV) has biased composition (polar residues). Positions 246 to 275 (ALIQAQAAAAAAEQLQQQQQQAARLAVSAN) form a coiled coil. Positions 391–437 (NNNASKQRSDSDSESVFTDDDEWAHPLPLRENVDRSTRPSDSSIENE) are disordered. The residue at position 399 (serine 399) is a Phosphoserine. Threonine 481 carries the post-translational modification Phosphothreonine. 2 interaction with DRK regions span residues 638 to 650 (DCPP…KPKV) and 690 to 702 (GPPS…KPNA). Disordered regions lie at residues 686–721 (QQPI…SSGA) and 749–773 (LPRQ…RTAS). 2 stretches are compositionally biased toward polar residues: residues 707-718 (NSATMSPATRRS) and 760-770 (SPGSMSVQHQR). Threonine 771 carries the phosphothreonine modification. Phosphotyrosine occurs at positions 801 and 854.

As to quaternary structure, interacts with DRK. In terms of processing, phosphorylated on Tyr-801 and Tyr-854 in response to sevenless activation, which initiates the recruitment of the phosphatase CSW.

It is found in the cytoplasm. Its subcellular location is the membrane. In terms of biological role, essential component for signaling from various receptor tyrosine kinases such as Sevenless, TORSO and DER. Required for photoreceptor cell and wing development. The protein is Protein daughter of sevenless (dos) of Drosophila melanogaster (Fruit fly).